A 257-amino-acid chain; its full sequence is Taurine import ATP-binding protein TauB (257 aa).

In terms of domain architecture, ABC transporter spans 6–233 (LDKISIHYDG…RYAAGEPIRA (228 aa)). 38–45 (GRSGCGKT) contacts ATP.

This sequence belongs to the ABC transporter superfamily. Taurine importer (TC 3.A.1.17.1) family. As to quaternary structure, the complex is composed of two ATP-binding proteins (TauB), two transmembrane proteins (TauC) and a solute-binding protein (TauA).

Its subcellular location is the cell inner membrane. It carries out the reaction taurine(out) + ATP + H2O = taurine(in) + ADP + phosphate + H(+). Its function is as follows. Part of the ABC transporter complex TauABC involved in taurine import. Responsible for energy coupling to the transport system. The polypeptide is Taurine import ATP-binding protein TauB (Mesorhizobium japonicum (strain LMG 29417 / CECT 9101 / MAFF 303099) (Mesorhizobium loti (strain MAFF 303099))).